Reading from the N-terminus, the 338-residue chain is DNA-directed RNA polymerase subunit alpha (338 aa).

An alpha N-terminal domain (alpha-NTD) region spans residues 1 to 225; the sequence is MLISQRPTIT…ELFGLARELN (225 aa). Positions 242–338 are alpha C-terminal domain (alpha-CTD); it reads YIAAYSMPIE…YIDVEAEDSE (97 aa). Residues 319–338 are disordered; it reads LEGYDAETGGYIDVEAEDSE.

Belongs to the RNA polymerase alpha chain family. Homodimer. The RNAP catalytic core consists of 2 alpha, 1 beta, 1 beta' and 1 omega subunit. When a sigma factor is associated with the core the holoenzyme is formed, which can initiate transcription.

The catalysed reaction is RNA(n) + a ribonucleoside 5'-triphosphate = RNA(n+1) + diphosphate. Its function is as follows. DNA-dependent RNA polymerase catalyzes the transcription of DNA into RNA using the four ribonucleoside triphosphates as substrates. The chain is DNA-directed RNA polymerase subunit alpha from Corynebacterium glutamicum (strain ATCC 13032 / DSM 20300 / JCM 1318 / BCRC 11384 / CCUG 27702 / LMG 3730 / NBRC 12168 / NCIMB 10025 / NRRL B-2784 / 534).